Consider the following 155-residue polypeptide: Large ribosomal subunit protein uL22c (155 aa).

This sequence belongs to the universal ribosomal protein uL22 family. Part of the 50S ribosomal subunit.

It localises to the plastid. Its subcellular location is the chloroplast. This protein binds specifically to 23S rRNA. Its function is as follows. The globular domain of the protein is located near the polypeptide exit tunnel on the outside of the subunit, while an extended beta-hairpin is found that lines the wall of the exit tunnel in the center of the 70S ribosome. The chain is Large ribosomal subunit protein uL22c (rpl22) from Nicotiana tomentosiformis (Tobacco).